We begin with the raw amino-acid sequence, 569 residues long: Adenine deaminase (569 aa).

The protein belongs to the metallo-dependent hydrolases superfamily. Adenine deaminase family. Mn(2+) serves as cofactor.

The catalysed reaction is adenine + H2O + H(+) = hypoxanthine + NH4(+). The polypeptide is Adenine deaminase (Desulfatibacillum aliphaticivorans).